Here is a 286-residue protein sequence, read N- to C-terminus: MASPGILEESSSGDVCSGGCPDQWEEKTEEELQCQFEQAAKHVQNVASVASTEQLLYLYARYKQVKVGRCNTPKPGFFDYEGKKKWEAWKALGDYSHQQAMTEYIETVKKLDPDWSPQALEEPYKEPKTTFGGPVVSCLYKVQETLREEDKDIFDYCRENNHSRVSHALSTGSVDVNVADDEGRSLLHWACDRGHTQLVSVILFHNAHINMQDSEGQTPLHYASACEFPDIVDLLLDHGADPSLVDNDGFQPHEVTDSKTIAAMLQQHASNGEHNKPPSLLLEMPQ.

Positions 32 to 117 constitute an ACB domain; sequence LQCQFEQAAK…VKKLDPDWSP (86 aa). An acyl-CoA contacts are provided by residues 59 to 63, Lys-85, and Tyr-104; that span reads YARYK. ANK repeat units follow at residues 182-211 and 215-244; these read EGRS…HINM and EGQT…DPSL.

Its subcellular location is the cytoplasm. The protein resides in the nucleus. In terms of biological role, binds long-chain acyl-coenzyme A molecules with a strong preference for unsaturated C18:1-CoA. Does not bind fatty acids. Plays a role in protein N-myristoylation. This is Acyl-CoA-binding domain-containing protein 6 (acbd6) from Xenopus laevis (African clawed frog).